Here is a 1439-residue protein sequence, read N- to C-terminus: Probable histone acetyltransferase HAC-like 2 (1439 aa).

Disordered stretches follow at residues Met1–Asp43 and Tyr313–Pro335. Positions Val325–Pro335 are enriched in polar residues. The TAZ-type zinc finger occupies Glu607–Ala687. The PHD-type; degenerate zinc-finger motif lies at Lys827–Glu933. One can recognise a CBP/p300-type HAT domain in the interval Val948 to Gly1383. The stretch at Glu964–Val989 forms a coiled coil. Acetyl-CoA contacts are provided by residues Leu1071 to Ser1073, Arg1090 to Thr1091, and Trp1146. A ZZ-type zinc finger spans residues His1265–Val1328. Zn(2+)-binding residues include Cys1270, Cys1273, Cys1285, Cys1288, Cys1294, Cys1297, His1310, and His1318.

The protein localises to the nucleus. It catalyses the reaction L-lysyl-[protein] + acetyl-CoA = N(6)-acetyl-L-lysyl-[protein] + CoA + H(+). Acetyltransferase enzyme. Acetylates histones, giving a specific tag for transcriptional activation. The protein is Probable histone acetyltransferase HAC-like 2 of Oryza sativa subsp. japonica (Rice).